Here is a 144-residue protein sequence, read N- to C-terminus: Group IID secretory phospholipase A2 (144 aa).

Positions Met1–Gly19 are cleaved as a signal peptide. Intrachain disulfides connect Cys45–Cys137, Cys47–Cys63, Cys62–Cys117, Cys68–Cys144, Cys69–Cys110, Cys78–Cys103, and Cys96–Cys108. Ca(2+)-binding residues include His46, Gly48, and Gly50. Residue His66 is part of the active site. Residue Asp67 coordinates Ca(2+). Asn99 is a glycosylation site (N-linked (GlcNAc...) asparagine). Asp111 is a catalytic residue.

Belongs to the phospholipase A2 family. Ca(2+) is required as a cofactor. In terms of tissue distribution, highly expressed in secondary lymphoid tissues, spleen and lymph nodes. Expressed at a lesser extent in thymus. Expressed in CD4-positive, IL2RA/CD25-positive, FOXP3-positive Tregs (at protein level). Expressed in myeloid cell subsets resident in spleen and lymph nodes, ITGAX/CD11C-positive dendritic cells and macrophages (at protein level). Enriched in CD4-positive, ITGAM/CD11B-positive dendritic cell subset. Expressed in pulmonary ITGAX/CD11C-positive dendritic cell subset (at protein level).

Its subcellular location is the secreted. The protein resides in the cell membrane. It is found in the cytoplasm. It carries out the reaction a 1,2-diacyl-sn-glycero-3-phosphoethanolamine + H2O = a 1-acyl-sn-glycero-3-phosphoethanolamine + a fatty acid + H(+). The enzyme catalyses 1-hexadecanoyl-2-(9Z-octadecenoyl)-sn-glycero-3-phosphoethanolamine + H2O = 1-hexadecanoyl-sn-glycero-3-phosphoethanolamine + (9Z)-octadecenoate + H(+). It catalyses the reaction 1-hexadecanoyl-2-(9Z,12Z-octadecadienoyl)-sn-glycero-3-phosphoethanolamine + H2O = 1-hexadecanoyl-sn-glycero-3-phosphoethanolamine + (9Z,12Z)-octadecadienoate + H(+). The catalysed reaction is 1,2-dihexadecanoyl-sn-glycero-3-phospho-(1'-sn-glycerol) + H2O = 1-hexadecanoyl-sn-glycero-3-phospho-(1'-sn-glycerol) + hexadecanoate + H(+). It carries out the reaction 1-hexadecanoyl-2-(9Z-octadecenoyl)-sn-glycero-3-phospho-(1'-sn-glycerol) + H2O = 1-hexadecanoyl-sn-glycero-3-phospho-(1'-sn-glycerol) + (9Z)-octadecenoate + H(+). The enzyme catalyses a 1,2-diacyl-sn-glycero-3-phosphocholine + H2O = a 1-acyl-sn-glycero-3-phosphocholine + a fatty acid + H(+). It catalyses the reaction 1,2-dihexadecanoyl-sn-glycero-3-phosphocholine + H2O = 1-hexadecanoyl-sn-glycero-3-phosphocholine + hexadecanoate + H(+). The catalysed reaction is 1-hexadecanoyl-2-(9Z-octadecenoyl)-sn-glycero-3-phosphocholine + H2O = 1-hexadecanoyl-sn-glycero-3-phosphocholine + (9Z)-octadecenoate + H(+). It carries out the reaction 1-hexadecanoyl-2-(9Z,12Z-octadecadienoyl)-sn-glycero-3-phosphocholine + H2O = (9Z,12Z)-octadecadienoate + 1-hexadecanoyl-sn-glycero-3-phosphocholine + H(+). The enzyme catalyses 1-hexadecanoyl-2-(4Z,7Z,10Z,13Z,16Z,19Z-docosahexaenoyl)-sn-glycero-3-phosphocholine + H2O = (4Z,7Z,10Z,13Z,16Z,19Z)-docosahexaenoate + 1-hexadecanoyl-sn-glycero-3-phosphocholine + H(+). Secretory calcium-dependent phospholipase A2 that primarily targets extracellular lipids, exerting anti-inflammatory and immunosuppressive functions. Hydrolyzes the ester bond of the fatty acyl group attached at sn-2 position of phospholipids (phospholipase A2 activity) with preference for phosphatidylethanolamines and phosphatidylglycerols over phosphatidylcholines. In draining lymph nodes, selectively hydrolyzes diacyl and alkenyl forms of phosphatidylethanolamines, releasing omega-3 polyunsaturated fatty acids (PUFAs) such as eicosapentaenoate and docosahexaenoate that are precursors of the anti-inflammatory lipid mediators, resolvins. During the resolution phase of acute inflammation drives docosahexaenoate-derived resolvin D1 synthesis, which suppresses dendritic cell activation and T-helper 1 immune response. May act in an autocrine and paracrine manner. Via a mechanism independent of its catalytic activity, promotes differentiation of regulatory T cells (Tregs) and participates in the maintenance of immune tolerance. May contribute to lipid remodeling of cellular membranes and generation of lipid mediators involved in pathogen clearance. Displays bactericidal activity against Gram-positive bacteria by directly hydrolyzing phospholipids of the bacterial membrane. The protein is Group IID secretory phospholipase A2 (Pla2g2d) of Mus musculus (Mouse).